The chain runs to 400 residues: GTPase Obg (400 aa).

The Obg domain maps to 1–159 (MKFVDEVQIR…RTLKLELLLL (159 aa)). The OBG-type G domain maps to 160–333 (ADVGMLGLPN…VCYDILDLLD (174 aa)). GTP is bound by residues 166–173 (GLPNAGKS), 191–195 (FTTLV), 213–216 (DIPG), 283–286 (NKMD), and 314–316 (SAI). Mg(2+) contacts are provided by serine 173 and threonine 193.

It belongs to the TRAFAC class OBG-HflX-like GTPase superfamily. OBG GTPase family. Monomer. Requires Mg(2+) as cofactor.

It is found in the cytoplasm. In terms of biological role, an essential GTPase which binds GTP, GDP and possibly (p)ppGpp with moderate affinity, with high nucleotide exchange rates and a fairly low GTP hydrolysis rate. Plays a role in control of the cell cycle, stress response, ribosome biogenesis and in those bacteria that undergo differentiation, in morphogenesis control. The polypeptide is GTPase Obg (Aeromonas salmonicida (strain A449)).